We begin with the raw amino-acid sequence, 149 residues long: Calmodulin (149 aa).

N-acetylalanine is present on Ala-2. EF-hand domains are found at residues 8-43 (EQIA…LGQN), 44-79 (PTEA…KMKD), 81-116 (DSEE…LGEK), and 117-149 (LTDE…MTAK). The Ca(2+) site is built by Asp-21, Asp-23, Asp-25, Thr-27, Glu-32, Asp-57, Asp-59, Asn-61, Thr-63, Glu-68, Asp-94, Asp-96, Asn-98, Tyr-100, and Glu-105. At Lys-116 the chain carries N6,N6,N6-trimethyllysine. 5 residues coordinate Ca(2+): Asp-130, Asp-132, Asp-134, Gln-136, and Glu-141.

It belongs to the calmodulin family.

Calmodulin acts as part of a calcium signal transduction pathway by mediating the control of a large number of enzymes, ion channels, aquaporins and other proteins through calcium-binding. Calcium-binding is required for the activation of calmodulin. Among the enzymes to be stimulated by the calmodulin-calcium complex are a number of protein kinases, such as myosin light-chain kinases and calmodulin-dependent protein kinase type II (CaMK2), and phosphatases. The sequence is that of Calmodulin (calm) from Epinephelus akaara (Hong Kong grouper).